Consider the following 430-residue polypeptide: Adenylosuccinate synthetase (430 aa).

GTP is bound by residues 13–19 and 41–43; these read GDEGKGK and GHT. Asp14 serves as the catalytic Proton acceptor. Mg(2+) is bound by residues Asp14 and Gly41. IMP contacts are provided by residues 14–17, 39–42, Thr130, Arg144, Gln225, Thr240, and Arg304; these read DEGK and NAGH. His42 functions as the Proton donor in the catalytic mechanism. A substrate-binding site is contributed by 300–306; sequence ASTGRPR. GTP-binding positions include Arg306, 332-334, and 414-416; these read KLD and STG.

This sequence belongs to the adenylosuccinate synthetase family. In terms of assembly, homodimer. The cofactor is Mg(2+).

Its subcellular location is the cytoplasm. It catalyses the reaction IMP + L-aspartate + GTP = N(6)-(1,2-dicarboxyethyl)-AMP + GDP + phosphate + 2 H(+). Its pathway is purine metabolism; AMP biosynthesis via de novo pathway; AMP from IMP: step 1/2. Functionally, plays an important role in the de novo pathway of purine nucleotide biosynthesis. Catalyzes the first committed step in the biosynthesis of AMP from IMP. This is Adenylosuccinate synthetase from Xylella fastidiosa (strain M12).